The chain runs to 73 residues: Putative defensin-like protein 33 (73 aa).

An N-terminal signal peptide occupies residues 1–25 (MASNKVSFIFILFLCVLSTAEFGEA). 3 cysteine pairs are disulfide-bonded: cysteine 33-cysteine 59, cysteine 45-cysteine 68, and cysteine 49-cysteine 70.

It belongs to the DEFL family.

The protein resides in the secreted. In Arabidopsis thaliana (Mouse-ear cress), this protein is Putative defensin-like protein 33.